Here is a 353-residue protein sequence, read N- to C-terminus: Phospho-N-acetylmuramoyl-pentapeptide-transferase (353 aa).

10 helical membrane passes run 22-42 (FAFF…ITWA), 65-85 (TPTM…LFCI), 88-108 (DNIF…IGLI), 129-149 (LLAQ…SSEL), 161-181 (PLFD…ISSS), 192-212 (GLAT…LYLS), 228-248 (GLGE…GFLW), 256-276 (VFMG…LAVI), 281-301 (ILLL…ILQV), and 330-350 (KIIV…LASI).

It belongs to the glycosyltransferase 4 family. MraY subfamily. Mg(2+) is required as a cofactor.

It localises to the cell inner membrane. The catalysed reaction is UDP-N-acetyl-alpha-D-muramoyl-L-alanyl-gamma-D-glutamyl-meso-2,6-diaminopimeloyl-D-alanyl-D-alanine + di-trans,octa-cis-undecaprenyl phosphate = di-trans,octa-cis-undecaprenyl diphospho-N-acetyl-alpha-D-muramoyl-L-alanyl-D-glutamyl-meso-2,6-diaminopimeloyl-D-alanyl-D-alanine + UMP. The protein operates within cell wall biogenesis; peptidoglycan biosynthesis. Its function is as follows. Catalyzes the initial step of the lipid cycle reactions in the biosynthesis of the cell wall peptidoglycan: transfers peptidoglycan precursor phospho-MurNAc-pentapeptide from UDP-MurNAc-pentapeptide onto the lipid carrier undecaprenyl phosphate, yielding undecaprenyl-pyrophosphoryl-MurNAc-pentapeptide, known as lipid I. This is Phospho-N-acetylmuramoyl-pentapeptide-transferase from Campylobacter jejuni subsp. jejuni serotype O:2 (strain ATCC 700819 / NCTC 11168).